A 289-amino-acid polypeptide reads, in one-letter code: Heme oxygenase 1, chloroplastic (289 aa).

The transit peptide at M1 to V64 directs the protein to the chloroplast. Residue H96 participates in heme b binding.

It belongs to the heme oxygenase family.

The protein resides in the plastid. It is found in the chloroplast. It carries out the reaction heme b + 3 reduced [NADPH--hemoprotein reductase] + 3 O2 = biliverdin IXalpha + CO + Fe(2+) + 3 oxidized [NADPH--hemoprotein reductase] + 3 H2O + H(+). Catalyzes the opening of the heme ring to form the open-chain tetrapyrrole biliverdin IX with the release of iron and carbon monoxide (CO). Is a key enzyme in the synthesis of the chromophore of the phytochrome family of plant photoreceptors. Essential for photoperiod response and repression of flowering through cytochromes that inhibit flowering by affecting both HD1 and EHD1 flowering pathways. The polypeptide is Heme oxygenase 1, chloroplastic (HO1) (Oryza sativa subsp. japonica (Rice)).